The sequence spans 207 residues: MAKTYDYLFKLLLIGDSGVGKTCLLFRFSEDAFNTTFISTIGIDFKIRTIELDGKKIKLQIWDTAGQERFRTITTAYYRGAMGIMLVYDITNEKSFDNIKNWIRNIEEHASSDVERMILGNKCDMNDKRQVSKERGEKLAIDYGIKFLETSAKSSTNVEEAFFTLARDIMTKLNRKMNDSNSSGAGGPVKITESRSKKTSFFRCSLL.

GTP is bound by residues Ser17, Gly18, Val19, Gly20, Lys21, Thr22, Cys23, Thr35, Ser39, and Thr40. Thr22 provides a ligand contact to Mg(2+). Short sequence motifs (switch) lie at residues 31-45 (DAFNTTFISTIGIDF) and 63-80 (DTAGQERFRTITTAYYRG). The Mg(2+) site is built by Thr40 and Asp63. Residue Gly66 participates in GTP binding. Position 72 is a phosphothreonine; by LRRK2 (Thr72). The GTP site is built by Asn121, Lys122, Asp124, Ala152, and Lys153. Residues Ser180 and Ser183 each carry the phosphoserine modification. Cys204 is subject to Cysteine methyl ester. Cys204 is lipidated: S-geranylgeranyl cysteine. The propeptide at 205 to 207 (SLL) is removed in mature form.

It belongs to the small GTPase superfamily. Rab family. In terms of assembly, associated with actin, delta-catenin and alpha and beta tubulins. Interacts with OTOF. Interacts with PEX5R. Interacts with RAB3IP. Interacts with VIM. Interacts with CDH1. Interacts with MICALL2. Interacts with GDI1, GDI2, CHML and CHM; phosphorylation at Thr-72 disrupts these interactions. Interacts with MICAL1. Mg(2+) serves as cofactor. In terms of processing, phosphorylation of Thr-72 in the switch II region by LRRK2 prevents the association of RAB regulatory proteins, including CHM, CHML and RAB GDP dissociation inhibitors GDI1 and GDI2.

The protein resides in the cell membrane. It localises to the cytoplasmic vesicle. The protein localises to the phagosome membrane. Its subcellular location is the endosome membrane. The enzyme catalyses GTP + H2O = GDP + phosphate + H(+). With respect to regulation, regulated by guanine nucleotide exchange factors (GEFs) including RAB3IP/RABIN8 which promotes the exchange of bound GDP for free GTP. Regulated by GTPase activating proteins (GAPs) which increase the GTP hydrolysis activity. Inhibited by GDP dissociation inhibitors (GDIs). Its function is as follows. The small GTPases Rab are key regulators of intracellular membrane trafficking, from the formation of transport vesicles to their fusion with membranes. Rabs cycle between an inactive GDP-bound form and an active GTP-bound form that is able to recruit to membranes different sets of downstream effectors directly responsible for vesicle formation, movement, tethering and fusion. RAB8B may be involved in polarized vesicular trafficking and neurotransmitter release. May participate in cell junction dynamics in Sertoli cells. May also participate in the export of a subset of neosynthesized proteins through a Rab8-Rab10-Rab11-dependent endososomal export route. This is Ras-related protein Rab-8B from Mus musculus (Mouse).